Reading from the N-terminus, the 391-residue chain is Thyroid hormone receptor alpha-B (391 aa).

Residues 1 to 32 (MAQWPEKEEEEQPMFGEEYTGYIPSYLEKDEP) are modulating. NR C4-type zinc fingers lie at residues 33–53 (CVVC…CEGC) and 71–95 (CKYD…FKKC). The segment at residues 33-100 (CVVCGDKATG…RFKKCIAVGM (68 aa)) is a DNA-binding region (nuclear receptor). An NR LBD domain is found at 143 to 388 (AEWELIRMVT…PPLFLEVFED (246 aa)).

It belongs to the nuclear hormone receptor family. NR1 subfamily.

It is found in the nucleus. High affinity receptor for triiodothyronine. This is Thyroid hormone receptor alpha-B (thra2) from Paralichthys olivaceus (Bastard halibut).